The sequence spans 422 residues: Steroid hormone receptor ERR1 (422 aa).

The tract at residues 1-67 is disordered; sequence MSSQVVGIEP…GAGPGEQGGG (67 aa). Phosphoserine occurs at positions 19 and 22. Positions 58 to 67 are enriched in gly residues; it reads GAGPGEQGGG. The segment at residues 76–151 is a DNA-binding region (nuclear receptor); sequence KRLCLVCGDV…VGMLKEGVRL (76 aa). 2 NR C4-type zinc fingers span residues 79–99 and 115–134; these read CLVCGDVASGYHYGVASCEAC and CPASNECEITKRRRKACQAC. 4 positions are modified to N6-acetyllysine; by PCAF/KAT2B: Lys-129, Lys-138, Lys-160, and Lys-162. Residues Lys-189 and Lys-402 each participate in a glycyl lysine isopeptide (Lys-Gly) (interchain with G-Cter in SUMO2) cross-link. One can recognise an NR LBD domain in the interval 192–420; sequence PVNALVSHLL…KLFLEMLEAM (229 aa).

Belongs to the nuclear hormone receptor family. NR3 subfamily. In terms of assembly, binds DNA as a monomer or a homodimer. Interacts (via the AF2 domain) with coactivator PPARGC1A (via the L3 motif); the interaction greatly enhances transcriptional activity of genes involved in energy metabolism. Interacts with PIAS4; the interaction enhances sumoylation. Interacts with MAPK15; promotes re-localization of ESRRA to the cytoplasm through a XPO1-dependent mechanism then inhibits ESRRA transcriptional activity. In terms of processing, phosphorylation on Ser-19 enhances sumoylation on Lys-14 increasing repression of transcriptional activity. Post-translationally, sumoylated with SUMO2. Main site is Lys-14 which is enhanced by phosphorylation on Ser-19, cofactor activation, and by interaction with PIAS4. Sumoylation enhances repression of transcriptional activity, but has no effect on subcellular location nor on DNA binding. Reversibly acetylated. Acetylation by PCAF/KAT2 at Lys-129, Lys-138, Lys-160 and Lys-162 and PCAF/KAT2 decreases transcriptional activity probably by inhibiting DNA-binding activity; deacetylation involves SIRT1 and HDAC8 and increases DNA-binding.

Its subcellular location is the nucleus. The protein localises to the cytoplasm. In terms of biological role, binds to an ERR-alpha response element (ERRE) containing a single consensus half-site, 5'-TNAAGGTCA-3'. Can bind to the medium-chain acyl coenzyme A dehydrogenase (MCAD) response element NRRE-1 and may act as an important regulator of MCAD promoter. May function as a modulator of the estrogen signaling pathway in the uterus. Induces the expression of PERM1 in the skeletal muscle. The sequence is that of Steroid hormone receptor ERR1 (ESRRA) from Canis lupus familiaris (Dog).